The following is a 75-amino-acid chain: Putative DNA-directed RNA polymerase subunit omega (75 aa).

Belongs to the RNA polymerase subunit omega family.

The protein localises to the plastid. It localises to the chloroplast. The enzyme catalyses RNA(n) + a ribonucleoside 5'-triphosphate = RNA(n+1) + diphosphate. In terms of biological role, may be involved in RNA polymerase activity. This chain is Putative DNA-directed RNA polymerase subunit omega (rpoZ), found in Mesostigma viride (Green alga).